The following is a 268-amino-acid chain: Undecaprenyl-diphosphatase (268 aa).

The next 6 helical transmembrane spans lie at 39-59 (SETFNIFIQLGAVLAVCLIYK), 75-95 (LPYFLKLSVAFIITSILGLWV), 106-126 (LGPVIIAIFGGAFWIYFTEKV), 179-199 (TEFAFLLGIPTMFAASLFAWI), 214-234 (LTLATGFCVSAVVAFISVKWL), and 243-263 (FIPFVWYRVGLGFFLIALVAL).

The protein belongs to the UppP family.

The protein localises to the cell inner membrane. The enzyme catalyses di-trans,octa-cis-undecaprenyl diphosphate + H2O = di-trans,octa-cis-undecaprenyl phosphate + phosphate + H(+). Functionally, catalyzes the dephosphorylation of undecaprenyl diphosphate (UPP). Confers resistance to bacitracin. The sequence is that of Undecaprenyl-diphosphatase from Methylacidiphilum infernorum (isolate V4) (Methylokorus infernorum (strain V4)).